The following is a 64-amino-acid chain: Large ribosomal subunit protein uL1 (64 aa).

This sequence belongs to the universal ribosomal protein uL1 family. Part of the 50S ribosomal subunit.

In terms of biological role, binds directly to 23S rRNA. The L1 stalk is quite mobile in the ribosome, and is involved in E site tRNA release. Protein L1 is also a translational repressor protein, it controls the translation of the L11 operon by binding to its mRNA. The chain is Large ribosomal subunit protein uL1 (rplA) from Streptomyces lavendulae.